Consider the following 746-residue polypeptide: Tudor domain-containing protein krimp (746 aa).

The tract at residues 1–310 (MNLEDISMIM…RDIYNQILKD (310 aa)) is involved in homooligomerization. The segment at 311–489 (MAAFPENTIV…PAGITEDDMA (179 aa)) is non-canonical tudor domain. The C3H1-type zinc-finger motif lies at 511–540 (KDEQRICRHYDPKLNGCFKGNNCRFAHEPF). The Tudor domain maps to 613–670 (KPRLLDIVLALYSDGCFYRAQIIDEFPSEYMIFYVDYGNTEFVPLSCLAPCENVDSFK).

Belongs to the Tudor domain containing protein family. In terms of assembly, homooligomerizes (via N-terminus). Component of the ping-pong piRNA processing (4P) complex consisting of krimp, aub and AGO3; a single molecule of krimp can bind both aub and AGO3 without the need for homooligomerization. Interacts (via canonical tudor domain) with aub (via N-terminus when symmetrically dimethylated on arginine residues). Interacts (via non-canonical tudor domain) with AGO3 (via N-terminus when unmethylated on arginine residues); this interaction leads to symmetrical dimethylation on AGO3 arginine residues and its subsequent dissociation from krimp. Krimp associated AGO3 is mostly free of piRNA binding and the interaction plays an important role in the loading of AGO3 with piRNAs; piRNA binding stimulates methylation of ACO3 by the csul/PRMT5 methylosome complex and promotes dissociation of the two proteins. As to expression, widely expressed in female germline cells, including differentiating germ cells in germarium and egg chambers (at protein level).

It is found in the cytoplasm. The protein resides in the perinuclear region. The protein localises to the cytoplasmic ribonucleoprotein granule. Its function is as follows. Stable structural component of the perinuclear meiotic nuage, a germline-specific subcellular membraneless ribonucleoprotein compartment involved in production of transposable element-repressing Piwi-interacting RNA (piRNA)-induced silencing complexes (piRISCs), which are essential for maintaining germline integrity during oogenesis. Scaffold component of the ping-pong piRNA processing (4P) complex that recruits the Piwi proteins aub and AGO3 to specific subregions of the nuage where it coordinates their activity in the ping-pong amplification step of secondary piRNA biogenesis. Binds methylated aub, which is associated with piRNA, and unmethylated AGO3, which is not associated with piRNA, bringing the Piwi proteins into close proximity and facilitating the loading of freshly cut piRNAs generated by aub onto AGO3. Promotes asymmetric ping-pong amplification by aub and AGO3 to bias production towards antisense piRNAs capable of silencing transposable elements. Required for symmetrical dimethylation of AGO3, probably by recruitment to the nuage where methylosome components are located; dimethylation promotes AGO3 dissociation and interaction with other tudor-domain containing proteins such as tud. Required for the recruitment of mael to the perinuclear meiotic nuage. Required for the recruitment of aub to the nuage in testes but not in ovaries. Involved in repression of long interspersed nuclear elements (LINEs) including HeT-A, I-element LINEs and possibly mst40, but not TART LINEs. This Drosophila melanogaster (Fruit fly) protein is Tudor domain-containing protein krimp.